We begin with the raw amino-acid sequence, 70 residues long: Cytochrome c oxidase subunit 8B, mitochondrial (70 aa).

The transit peptide at 1–24 (MPRLPPILRLLQAPAKFTVVPKAH) directs the protein to the mitochondrion. Residues 25–38 (VSAKPAKTPTSAVE) are Mitochondrial matrix-facing. Residues 39 to 60 (QAVGISAIVVGFMVPAGWVLAH) traverse the membrane as a helical segment. Residues 61 to 70 (LESYKKSSAA) are Mitochondrial intermembrane-facing.

Belongs to the cytochrome c oxidase VIII family. Component of the cytochrome c oxidase (complex IV, CIV), a multisubunit enzyme composed of 14 subunits. The complex is composed of a catalytic core of 3 subunits MT-CO1, MT-CO2 and MT-CO3, encoded in the mitochondrial DNA, and 11 supernumerary subunits COX4I, COX5A, COX5B, COX6A, COX6B, COX6C, COX7A, COX7B, COX7C, COX8 and NDUFA4, which are encoded in the nuclear genome. The complex exists as a monomer or a dimer and forms supercomplexes (SCs) in the inner mitochondrial membrane with NADH-ubiquinone oxidoreductase (complex I, CI) and ubiquinol-cytochrome c oxidoreductase (cytochrome b-c1 complex, complex III, CIII), resulting in different assemblies (supercomplex SCI(1)III(2)IV(1) and megacomplex MCI(2)III(2)IV(2)).

It is found in the mitochondrion inner membrane. The protein operates within energy metabolism; oxidative phosphorylation. Its function is as follows. Component of the cytochrome c oxidase, the last enzyme in the mitochondrial electron transport chain which drives oxidative phosphorylation. The respiratory chain contains 3 multisubunit complexes succinate dehydrogenase (complex II, CII), ubiquinol-cytochrome c oxidoreductase (cytochrome b-c1 complex, complex III, CIII) and cytochrome c oxidase (complex IV, CIV), that cooperate to transfer electrons derived from NADH and succinate to molecular oxygen, creating an electrochemical gradient over the inner membrane that drives transmembrane transport and the ATP synthase. Cytochrome c oxidase is the component of the respiratory chain that catalyzes the reduction of oxygen to water. Electrons originating from reduced cytochrome c in the intermembrane space (IMS) are transferred via the dinuclear copper A center (CU(A)) of subunit 2 and heme A of subunit 1 to the active site in subunit 1, a binuclear center (BNC) formed by heme A3 and copper B (CU(B)). The BNC reduces molecular oxygen to 2 water molecules using 4 electrons from cytochrome c in the IMS and 4 protons from the mitochondrial matrix. This is Cytochrome c oxidase subunit 8B, mitochondrial (Cox8b) from Mus musculus (Mouse).